Reading from the N-terminus, the 67-residue chain is Large ribosomal subunit protein uL29 (67 aa).

It belongs to the universal ribosomal protein uL29 family.

This is Large ribosomal subunit protein uL29 (rpmC) from Halalkalibacterium halodurans (strain ATCC BAA-125 / DSM 18197 / FERM 7344 / JCM 9153 / C-125) (Bacillus halodurans).